We begin with the raw amino-acid sequence, 348 residues long: MMHAVIDALCAGVDLSAEQTEALFRDLIAGALTEIELSALFVALKAKGETPAEIAGAARALRGTSVPFARPAYVYADCCGTGGDGQSTVNVSTAVAFVAAEAGLPVAKHGNRSVSSQCGSADALEALGARLDPPAEVSRRALDEVGFCFLFAPQYHAGLRHAMPVRRALKVRTIMNLLGPLVNPSAPPIQVMGIYDPELVTHAARTLGMLGCQAALVVHGGGLDEVALHAPTRAARLRDGVVEELLIDPADAGVAPAPIEALRGAGPAANAAWLRDLLAGRGAPAHRDAVAINAGALLWIAGRAEGLREGTALALEALGSGRAAERLTRFVALSRDGAQEARKEAKHG.

5-phospho-alpha-D-ribose 1-diphosphate-binding positions include Gly80, 83–84 (GD), Thr88, 90–93 (NVST), 108–116 (KHGNRSVSS), and Ser120. Gly80 serves as a coordination point for anthranilate. Mg(2+) is bound at residue Ser92. Asn111 is a binding site for anthranilate. An anthranilate-binding site is contributed by Arg166. Mg(2+) contacts are provided by Asp224 and Glu225.

This sequence belongs to the anthranilate phosphoribosyltransferase family. As to quaternary structure, homodimer. Requires Mg(2+) as cofactor.

It carries out the reaction N-(5-phospho-beta-D-ribosyl)anthranilate + diphosphate = 5-phospho-alpha-D-ribose 1-diphosphate + anthranilate. It functions in the pathway amino-acid biosynthesis; L-tryptophan biosynthesis; L-tryptophan from chorismate: step 2/5. Its function is as follows. Catalyzes the transfer of the phosphoribosyl group of 5-phosphorylribose-1-pyrophosphate (PRPP) to anthranilate to yield N-(5'-phosphoribosyl)-anthranilate (PRA). This is Anthranilate phosphoribosyltransferase from Sorangium cellulosum (strain So ce56) (Polyangium cellulosum (strain So ce56)).